A 266-amino-acid chain; its full sequence is 4-hydroxy-tetrahydrodipicolinate reductase (266 aa).

NAD(+)-binding positions include 8 to 13 (GAAGRM) and Glu-33. Arg-34 serves as a coordination point for NADP(+). NAD(+) is bound by residues 97-99 (GST) and 121-124 (APNM). Catalysis depends on His-154, which acts as the Proton donor/acceptor. His-155 serves as a coordination point for (S)-2,3,4,5-tetrahydrodipicolinate. The Proton donor role is filled by Lys-158. 164–165 (GT) contacts (S)-2,3,4,5-tetrahydrodipicolinate.

The protein belongs to the DapB family.

The protein resides in the cytoplasm. It carries out the reaction (S)-2,3,4,5-tetrahydrodipicolinate + NAD(+) + H2O = (2S,4S)-4-hydroxy-2,3,4,5-tetrahydrodipicolinate + NADH + H(+). The catalysed reaction is (S)-2,3,4,5-tetrahydrodipicolinate + NADP(+) + H2O = (2S,4S)-4-hydroxy-2,3,4,5-tetrahydrodipicolinate + NADPH + H(+). Its pathway is amino-acid biosynthesis; L-lysine biosynthesis via DAP pathway; (S)-tetrahydrodipicolinate from L-aspartate: step 4/4. Catalyzes the conversion of 4-hydroxy-tetrahydrodipicolinate (HTPA) to tetrahydrodipicolinate. This Geobacter metallireducens (strain ATCC 53774 / DSM 7210 / GS-15) protein is 4-hydroxy-tetrahydrodipicolinate reductase.